Here is a 157-residue protein sequence, read N- to C-terminus: 6,7-dimethyl-8-ribityllumazine synthase (157 aa).

5-amino-6-(D-ribitylamino)uracil contacts are provided by residues phenylalanine 22, 56–58 (AFE), and 81–83 (VLI). 86-87 (ET) lines the (2S)-2-hydroxy-3-oxobutyl phosphate pocket. Histidine 89 (proton donor) is an active-site residue. Residue phenylalanine 114 coordinates 5-amino-6-(D-ribitylamino)uracil. Arginine 128 contributes to the (2S)-2-hydroxy-3-oxobutyl phosphate binding site.

Belongs to the DMRL synthase family.

It carries out the reaction (2S)-2-hydroxy-3-oxobutyl phosphate + 5-amino-6-(D-ribitylamino)uracil = 6,7-dimethyl-8-(1-D-ribityl)lumazine + phosphate + 2 H2O + H(+). The protein operates within cofactor biosynthesis; riboflavin biosynthesis; riboflavin from 2-hydroxy-3-oxobutyl phosphate and 5-amino-6-(D-ribitylamino)uracil: step 1/2. In terms of biological role, catalyzes the formation of 6,7-dimethyl-8-ribityllumazine by condensation of 5-amino-6-(D-ribitylamino)uracil with 3,4-dihydroxy-2-butanone 4-phosphate. This is the penultimate step in the biosynthesis of riboflavin. In Chlamydia muridarum (strain MoPn / Nigg), this protein is 6,7-dimethyl-8-ribityllumazine synthase.